We begin with the raw amino-acid sequence, 62 residues long: Large ribosomal subunit protein bL32 (62 aa).

Positions 28-62 (SIEPTTGEVHRRHHISPDGFYRGRQVIKAKEQDEE) are disordered.

The protein belongs to the bacterial ribosomal protein bL32 family.

This Thioalkalivibrio sulfidiphilus (strain HL-EbGR7) protein is Large ribosomal subunit protein bL32.